The sequence spans 215 residues: uncharacterized protein (215 aa).

A helical membrane pass occupies residues 98 to 119 (AAALAVAVASLCVCTLLLTHIV).

Its subcellular location is the membrane. This is an uncharacterized protein from Treponema pallidum (strain Nichols).